Consider the following 357-residue polypeptide: UDP-N-acetylglucosamine--N-acetylmuramyl-(pentapeptide) pyrophosphoryl-undecaprenol N-acetylglucosamine transferase (357 aa).

UDP-N-acetyl-alpha-D-glucosamine is bound by residues 15 to 17 (TGG), Asn124, Arg165, Ser194, and Gln288.

This sequence belongs to the glycosyltransferase 28 family. MurG subfamily.

The protein resides in the cell inner membrane. It catalyses the reaction di-trans,octa-cis-undecaprenyl diphospho-N-acetyl-alpha-D-muramoyl-L-alanyl-D-glutamyl-meso-2,6-diaminopimeloyl-D-alanyl-D-alanine + UDP-N-acetyl-alpha-D-glucosamine = di-trans,octa-cis-undecaprenyl diphospho-[N-acetyl-alpha-D-glucosaminyl-(1-&gt;4)]-N-acetyl-alpha-D-muramoyl-L-alanyl-D-glutamyl-meso-2,6-diaminopimeloyl-D-alanyl-D-alanine + UDP + H(+). The protein operates within cell wall biogenesis; peptidoglycan biosynthesis. Its function is as follows. Cell wall formation. Catalyzes the transfer of a GlcNAc subunit on undecaprenyl-pyrophosphoryl-MurNAc-pentapeptide (lipid intermediate I) to form undecaprenyl-pyrophosphoryl-MurNAc-(pentapeptide)GlcNAc (lipid intermediate II). This Nostoc sp. (strain PCC 7120 / SAG 25.82 / UTEX 2576) protein is UDP-N-acetylglucosamine--N-acetylmuramyl-(pentapeptide) pyrophosphoryl-undecaprenol N-acetylglucosamine transferase.